Here is a 175-residue protein sequence, read N- to C-terminus: ATP synthase subunit b, chloroplastic (175 aa).

The chain crosses the membrane as a helical span at residues 24–46 (VLNLAVVLAIVLTYVGDALRGLL).

The protein belongs to the ATPase B chain family. As to quaternary structure, F-type ATPases have 2 components, F(1) - the catalytic core - and F(0) - the membrane proton channel. F(1) has five subunits: alpha(3), beta(3), gamma(1), delta(1), epsilon(1). F(0) has four main subunits: a(1), b(1), b'(1) and c(10-14). The alpha and beta chains form an alternating ring which encloses part of the gamma chain. F(1) is attached to F(0) by a central stalk formed by the gamma and epsilon chains, while a peripheral stalk is formed by the delta, b and b' chains.

The protein localises to the plastid. The protein resides in the chloroplast thylakoid membrane. In terms of biological role, f(1)F(0) ATP synthase produces ATP from ADP in the presence of a proton or sodium gradient. F-type ATPases consist of two structural domains, F(1) containing the extramembraneous catalytic core and F(0) containing the membrane proton channel, linked together by a central stalk and a peripheral stalk. During catalysis, ATP synthesis in the catalytic domain of F(1) is coupled via a rotary mechanism of the central stalk subunits to proton translocation. Component of the F(0) channel, it forms part of the peripheral stalk, linking F(1) to F(0). The chain is ATP synthase subunit b, chloroplastic from Chlorella vulgaris (Green alga).